Consider the following 262-residue polypeptide: Ribosomal RNA small subunit methyltransferase A (262 aa).

The S-adenosyl-L-methionine site is built by His16, Leu18, Gly43, Glu64, Asp89, and Asn109.

Belongs to the class I-like SAM-binding methyltransferase superfamily. rRNA adenine N(6)-methyltransferase family. RsmA subfamily.

It localises to the cytoplasm. It carries out the reaction adenosine(1518)/adenosine(1519) in 16S rRNA + 4 S-adenosyl-L-methionine = N(6)-dimethyladenosine(1518)/N(6)-dimethyladenosine(1519) in 16S rRNA + 4 S-adenosyl-L-homocysteine + 4 H(+). In terms of biological role, specifically dimethylates two adjacent adenosines (A1518 and A1519) in the loop of a conserved hairpin near the 3'-end of 16S rRNA in the 30S particle. May play a critical role in biogenesis of 30S subunits. This chain is Ribosomal RNA small subunit methyltransferase A, found in Xanthomonas axonopodis pv. citri (strain 306).